We begin with the raw amino-acid sequence, 350 residues long: Ornithine carbamoyltransferase, mitochondrial (350 aa).

The N-terminal 30 residues, 1 to 30 (MLHHMRTIINASWRYGNKCIVRQFGFSQTY), are a transit peptide targeting the mitochondrion. Carbamoyl phosphate contacts are provided by residues 86-90 (STRTR), Arg137, and His164. Arg137 contributes to the L-ornithine binding site. Residues Asn195, 259-263 (DTWVS), 298-301 (HCLP), and Arg326 each bind L-ornithine. Cys299 is a catalytic residue. A carbamoyl phosphate-binding site is contributed by Arg326.

This sequence belongs to the aspartate/ornithine carbamoyltransferase superfamily. OTCase family. Homotrimer. Liver.

The protein resides in the mitochondrion matrix. The catalysed reaction is carbamoyl phosphate + L-ornithine = L-citrulline + phosphate + H(+). The protein operates within nitrogen metabolism; urea cycle; L-citrulline from L-ornithine and carbamoyl phosphate: step 1/1. Its function is as follows. OTC is necessary for the tadpoles transition from an ammonotelic, aquatic larva to a ureotelic, terrestrial adult. The chain is Ornithine carbamoyltransferase, mitochondrial from Aquarana catesbeiana (American bullfrog).